We begin with the raw amino-acid sequence, 391 residues long: Phosphoglycerate kinase (391 aa).

Residues 21 to 23, R36, 59 to 62, R113, and R146 contribute to the substrate site; these read DLN and HLGR. ATP contacts are provided by residues K197, E319, and 345–348; that span reads GGDT.

The protein belongs to the phosphoglycerate kinase family. As to quaternary structure, monomer.

It is found in the cytoplasm. It catalyses the reaction (2R)-3-phosphoglycerate + ATP = (2R)-3-phospho-glyceroyl phosphate + ADP. It functions in the pathway carbohydrate degradation; glycolysis; pyruvate from D-glyceraldehyde 3-phosphate: step 2/5. This chain is Phosphoglycerate kinase, found in Stenotrophomonas maltophilia (strain K279a).